The sequence spans 1317 residues: DNA-directed RNA polymerase subunit beta' (1317 aa).

4 residues coordinate Zn(2+): cysteine 60, cysteine 62, cysteine 75, and cysteine 78. Residues aspartate 535, aspartate 537, and aspartate 539 each contribute to the Mg(2+) site. Residues cysteine 890, cysteine 967, cysteine 974, and cysteine 977 each coordinate Zn(2+).

It belongs to the RNA polymerase beta' chain family. In terms of assembly, the RNAP catalytic core consists of 2 alpha, 1 beta, 1 beta' and 1 omega subunit. When a sigma factor is associated with the core the holoenzyme is formed, which can initiate transcription. Mg(2+) is required as a cofactor. Zn(2+) serves as cofactor.

It catalyses the reaction RNA(n) + a ribonucleoside 5'-triphosphate = RNA(n+1) + diphosphate. Its function is as follows. DNA-dependent RNA polymerase catalyzes the transcription of DNA into RNA using the four ribonucleoside triphosphates as substrates. This chain is DNA-directed RNA polymerase subunit beta', found in Nocardia farcinica (strain IFM 10152).